Here is a 196-residue protein sequence, read N- to C-terminus: Superantigen-like protein 11 (196 aa).

Residues 65-167 (LDVFVVREGS…RVTMKNGDFY (103 aa)) form a sialyl Lewis X-binding region.

Belongs to the staphylococcal/streptococcal toxin family. In terms of assembly, homodimer (via its C-terminal domain). Interacts with host FCAR and SELPLG (via sialyl Lewis X).

The protein resides in the secreted. In terms of biological role, secreted protein that plays a role in the inhibition of host immune system. Targets myeloid cells such as monocytes or granulocytes through binding with sialyllactosamine-containing glycoproteins. Prevents initial rolling of neutrophils toward the site of infection by interacting with host SELPLG. Disrupts neutrophil motility by induction of cell adhesion via interacting with glycans but independently of SELPLG. This is Superantigen-like protein 11 from Staphylococcus aureus.